Reading from the N-terminus, the 477-residue chain is UDP-sulfoquinovose synthase, chloroplastic (477 aa).

Positions 1–21 are disordered; that stretch reads MAHLLSASCPSVISLSSSSSK. Residues 1-86 constitute a chloroplast transit peptide; that stretch reads MAHLLSASCP…TNNSSSKPKR (86 aa). NAD(+) contacts are provided by residues 95 to 96, 115 to 119, 158 to 159, R184, and N202; these read YC, DNLVR, and DI. Substrate is bound at residue R184. Residues T228 and Y265 each coordinate substrate. Residue T228 is part of the active site. The NAD(+) site is built by Y265 and K269. The Proton acceptor role is filled by Y265. K269 is an active-site residue. Residue Q292 coordinates substrate. V295 is an NAD(+) binding site. Substrate is bound by residues 322–325, 337–339, and 410–412; these read ALNR, TVY, and RVE.

It belongs to the NAD(P)-dependent epimerase/dehydratase family. Homodimer. NAD(+) serves as cofactor.

The protein localises to the plastid. It localises to the chloroplast. The enzyme catalyses sulfite + UDP-alpha-D-glucose + H(+) = UDP-alpha-D-6-sulfoquinovose + H2O. With respect to regulation, concentrations above 100 uM sulfite inhibit the reaction. Functionally, involved in the biosynthesis of sulfolipids found in thylakoid membranes. Converts UDP-glucose and sulfite to the sulfolipid head group precursor UDP-sulfoquinovose. The sequence is that of UDP-sulfoquinovose synthase, chloroplastic (SQD1) from Arabidopsis thaliana (Mouse-ear cress).